The primary structure comprises 347 residues: Methionine import ATP-binding protein MetN (347 aa).

The 240-residue stretch at 2–241 (IKLEGVSKTY…PATRLGRDFL (240 aa)) folds into the ABC transporter domain. Position 38 to 45 (38 to 45 (GLSGAGKS)) interacts with ATP.

The protein belongs to the ABC transporter superfamily. Methionine importer (TC 3.A.1.24) family. In terms of assembly, the complex is composed of two ATP-binding proteins (MetN), two transmembrane proteins (MetI) and a solute-binding protein (MetQ).

It is found in the cell inner membrane. It carries out the reaction L-methionine(out) + ATP + H2O = L-methionine(in) + ADP + phosphate + H(+). It catalyses the reaction D-methionine(out) + ATP + H2O = D-methionine(in) + ADP + phosphate + H(+). Functionally, part of the ABC transporter complex MetNIQ involved in methionine import. Responsible for energy coupling to the transport system. This is Methionine import ATP-binding protein MetN from Chromohalobacter salexigens (strain ATCC BAA-138 / DSM 3043 / CIP 106854 / NCIMB 13768 / 1H11).